Consider the following 565-residue polypeptide: MRQSKFFMPTLKEAPSDAVAESHKLMIRGGYIRQVTAGVYAYLPLGYRVLRKAESIIEQEMDNINVPEMMMPHLLPATLWQESGRYQKYGAEMFKLKDRHGRESLLGPTHEETFTEIIAKNLKSYKQMPLALYQIQTKFRDENRPRFGLLRGREFVMLDGYSFAATREQLDQQFDDQKSAYKRIFKRAGVTVHPVIADSGTMGGKNSTEFQAPAAIGEDTIATNEKGTYAANLEMAKSIDTFKQEPEEAKELTKVATPACDTIKKLAEFLDVPATRIVKSILYIADDQKVLVLIRGDKQINEVKLGHVLDADDIHEANTEDLKEITGSEKGGVGPVNADWADKIIADETVKGLYNVVVGAGETDYQFKNANLDRDFKVDEFADIRTANEGEPDPVDHLPLKFTTSIEVGHIFKLGTYYTKTMGADFLDQNGKAQPVIMGSYGIGVTRMLSAVVEQHLTDRGVAWPKEIAPFEIHIVQMKMNKEDQTELAEKLEKKFSEKYDVLYDDRKERAGVKFADADLVGAPVRITIGKKAADGIVEVKRPTDEKAVEMSIDELDKFVNQELG.

The protein belongs to the class-II aminoacyl-tRNA synthetase family. ProS type 1 subfamily. As to quaternary structure, homodimer.

Its subcellular location is the cytoplasm. The enzyme catalyses tRNA(Pro) + L-proline + ATP = L-prolyl-tRNA(Pro) + AMP + diphosphate. Functionally, catalyzes the attachment of proline to tRNA(Pro) in a two-step reaction: proline is first activated by ATP to form Pro-AMP and then transferred to the acceptor end of tRNA(Pro). As ProRS can inadvertently accommodate and process non-cognate amino acids such as alanine and cysteine, to avoid such errors it has two additional distinct editing activities against alanine. One activity is designated as 'pretransfer' editing and involves the tRNA(Pro)-independent hydrolysis of activated Ala-AMP. The other activity is designated 'posttransfer' editing and involves deacylation of mischarged Ala-tRNA(Pro). The misacylated Cys-tRNA(Pro) is not edited by ProRS. The chain is Proline--tRNA ligase from Lactobacillus acidophilus (strain ATCC 700396 / NCK56 / N2 / NCFM).